A 306-amino-acid polypeptide reads, in one-letter code: ATP synthase gamma chain (306 aa).

This sequence belongs to the ATPase gamma chain family. F-type ATPases have 2 components, CF(1) - the catalytic core - and CF(0) - the membrane proton channel. CF(1) has five subunits: alpha(3), beta(3), gamma(1), delta(1), epsilon(1). CF(0) has three main subunits: a, b and c.

It is found in the cell membrane. Functionally, produces ATP from ADP in the presence of a proton gradient across the membrane. The gamma chain is believed to be important in regulating ATPase activity and the flow of protons through the CF(0) complex. The protein is ATP synthase gamma chain of Bifidobacterium animalis subsp. lactis (strain AD011).